The primary structure comprises 541 residues: Membrane protein insertase YidC (541 aa).

Residues 6–26 (SLLVLALIFISFLVYQQWQLD) form a helical membrane-spanning segment. Residues 34-56 (EQTTSITATSDVPASSPSNSQAI) form a disordered region. The next 4 membrane-spanning stretches (helical) occupy residues 337 to 357 (FWLLTFIQGIVSNWGLAIICV), 416 to 436 (LGGCLPILLQMPIFIALYWTF), 454 to 474 (LSAQDPYYILPILMGISMFLL), and 495 to 515 (PLVFMFFFLWFPSGLVLYWLV).

Belongs to the OXA1/ALB3/YidC family. Type 1 subfamily. As to quaternary structure, interacts with the Sec translocase complex via SecD. Specifically interacts with transmembrane segments of nascent integral membrane proteins during membrane integration.

Its subcellular location is the cell inner membrane. In terms of biological role, required for the insertion and/or proper folding and/or complex formation of integral membrane proteins into the membrane. Involved in integration of membrane proteins that insert both dependently and independently of the Sec translocase complex, as well as at least some lipoproteins. Aids folding of multispanning membrane proteins. This Haemophilus influenzae (strain 86-028NP) protein is Membrane protein insertase YidC.